A 122-amino-acid polypeptide reads, in one-letter code: UPF0102 protein CE1920 (122 aa).

Belongs to the UPF0102 family.

The polypeptide is UPF0102 protein CE1920 (Corynebacterium efficiens (strain DSM 44549 / YS-314 / AJ 12310 / JCM 11189 / NBRC 100395)).